Reading from the N-terminus, the 368-residue chain is MWIKELELKHYRNYDHLLASFSSGLNVFIGNNAQGKTNFLEAIYFLSLTRSHRTRADKELIHFDHSTVSLTGKIQRISGTVDLEINLSDKGRVTKINALKQAKLSDYIGTMMVVLFAPEDLQLVKGAPSLRRKFIDIDLGQIKPVYLSELSHYNHVLKQRNSYLKSAQQIDAAFLAVLDEQLAGYGARVMEHRIDFINALEKEANTHHQAISNGLESLSLSYQSSVVFDKKTNIYQQFLHQLEKNHQKDFFRKNTSVGPHRDDLAFYINGMNANFASQGQHRSLILSLKMAEVSLMKALTGDNPILLLDDVMSELDNTRQTKLLETVIKENVQTFITTTSLDHLSQLPEGIRIFHVTKGTVQVDSDIH.

Gly30 to Thr37 is a binding site for ATP.

It belongs to the RecF family.

It localises to the cytoplasm. The RecF protein is involved in DNA metabolism; it is required for DNA replication and normal SOS inducibility. RecF binds preferentially to single-stranded, linear DNA. It also seems to bind ATP. This chain is DNA replication and repair protein RecF, found in Streptococcus pyogenes serotype M18 (strain MGAS8232).